We begin with the raw amino-acid sequence, 868 residues long: Coatomer subunit gamma (868 aa).

Over residues 1–11 (MWRTKRGRTRR) the composition is skewed to basic residues. Residues 1-22 (MWRTKRGRTRRRDAGGNPWQNL) are disordered. 4 HEAT repeats span residues 64-101 (REAT…IADD), 287-324 (RELS…LHPP), 326-359 (VNVC…GAES), and 360-396 (SVER…KFPR).

It belongs to the COPG family. As to quaternary structure, oligomeric complex that consists of at least the alpha, beta, beta', gamma, delta, epsilon and zeta subunits.

It is found in the cytoplasm. It localises to the golgi apparatus membrane. The protein resides in the cytoplasmic vesicle. Its subcellular location is the COPI-coated vesicle membrane. The protein localises to the endoplasmic reticulum. The coatomer is a cytosolic protein complex that binds to dilysine motifs and reversibly associates with Golgi non-clathrin-coated vesicles, which further mediate biosynthetic protein transport from the ER, via the Golgi up to the trans Golgi network. Coatomer complex is required for budding from Golgi membranes, and is essential for the retrograde Golgi-to-ER transport of dilysine-tagged proteins. This is Coatomer subunit gamma from Anopheles gambiae (African malaria mosquito).